A 159-amino-acid chain; its full sequence is Small ribosomal subunit protein uS7c (159 aa).

The protein belongs to the universal ribosomal protein uS7 family. Part of the 30S ribosomal subunit.

Its subcellular location is the plastid. It localises to the chloroplast. Its function is as follows. One of the primary rRNA binding proteins, it binds directly to 16S rRNA where it nucleates assembly of the head domain of the 30S subunit. The sequence is that of Small ribosomal subunit protein uS7c (rps7) from Bigelowiella natans (Pedinomonas minutissima).